A 668-amino-acid polypeptide reads, in one-letter code: Protein-glutamine gamma-glutamyltransferase (668 aa).

Residues 1 to 6 (MNAIPR) are Cytoplasmic-facing. Residues 7-27 (VALVWLLVAQVLVILPHLAYM) traverse the membrane as a helical segment. Residues 28 to 50 (PLWIAAMWLGCAAWRVQVFRMRA) are Periplasmic-facing. The helical transmembrane segment at 51-71 (GYPRAWVKLALALLAGAGVWL) threads the bilayer. At 72–74 (SRG) the chain is on the cytoplasmic side. A helical membrane pass occupies residues 75 to 95 (SLVGLDAGAVLLIAAFILKLV). Residues 96-103 (EMKTRRDA) are Periplasmic-facing. Transmembrane regions (helical) follow at residues 104 to 124 (LVLV…DDGF) and 125 to 145 (LAAL…IGLQ). The Cytoplasmic portion of the chain corresponds to 146–158 (QSAFASRPWPTLR). A helical transmembrane segment spans residues 159 to 179 (LAGGLLLQALPLMLLLFLFFP). Residues 180–548 (RLGPLWSLPM…FGGLDPTRLG (369 aa)) lie on the Periplasmic side of the membrane. The Nucleophile role is filled by Cys404. Residues His448 and Asp464 contribute to the active site. Residues 549–569 (LLLGAAAILSVGLLALFLLKP) traverse the membrane as a helical segment. Residues 570 to 668 (WQGRGDLRSR…TRDGRGEEQA (99 aa)) are Cytoplasmic-facing.

Belongs to the transglutaminase-like superfamily.

It localises to the cell inner membrane. The enzyme catalyses L-glutaminyl-[protein] + L-lysyl-[protein] = [protein]-L-lysyl-N(6)-5-L-glutamyl-[protein] + NH4(+). Functionally, displays transglutaminase activity (TGase) in vitro. Plays a critical role in the viability of P.aeruginosa. Might contribute to an essential function linked to the cell wall. The protein is Protein-glutamine gamma-glutamyltransferase (tgpA) of Pseudomonas aeruginosa (strain ATCC 15692 / DSM 22644 / CIP 104116 / JCM 14847 / LMG 12228 / 1C / PRS 101 / PAO1).